Here is a 286-residue protein sequence, read N- to C-terminus: Movement protein (286 aa).

Belongs to the tenuiviruses pc4 protein family. As to quaternary structure, interacts with the rice proteins DJA6 and HSP17.9A.

It localises to the host cytoplasm. Transports viral genome to neighboring plant cells directly through plasmosdesmata, without any budding. The movement protein allows efficient cell to cell propagation, by bypassing the host cell wall barrier. This Avena sativa (Oat) protein is Movement protein.